The chain runs to 500 residues: Probable malate:quinone oxidoreductase (500 aa).

Belongs to the MQO family. FAD is required as a cofactor.

It carries out the reaction (S)-malate + a quinone = a quinol + oxaloacetate. The protein operates within carbohydrate metabolism; tricarboxylic acid cycle; oxaloacetate from (S)-malate (quinone route): step 1/1. The protein is Probable malate:quinone oxidoreductase of Bacillus cereus (strain B4264).